An 84-amino-acid chain; its full sequence is Beta-cardiotoxin CTX21 (84 aa).

A signal peptide spans 1-21 (MKTLLLTLVVVTIVCLDLGYT). 4 cysteine pairs are disulfide-bonded: cysteine 24/cysteine 43, cysteine 36/cysteine 61, cysteine 65/cysteine 76, and cysteine 77/cysteine 82.

The protein belongs to the three-finger toxin family. Short-chain subfamily. Aminergic toxin sub-subfamily. In terms of tissue distribution, expressed by the venom gland.

It localises to the secreted. Its function is as follows. Acts as a beta-blocker by binding to beta-1 and beta-2 adrenergic receptors (ADRB1 and ADRB2). It dose-dependently decreases the heart rate (bradycardia), whereas conventional cardiotoxins increases it. At 100 mg/kg, intraperitoneal injection into mice provokes labored breathing, impaired locomotion, lack of response to external stimuli, and death (after 30 minutes). In Ophiophagus hannah (King cobra), this protein is Beta-cardiotoxin CTX21.